The following is a 478-amino-acid chain: Aspartyl/glutamyl-tRNA(Asn/Gln) amidotransferase subunit B (478 aa).

It belongs to the GatB/GatE family. GatB subfamily. In terms of assembly, heterotrimer of A, B and C subunits.

The catalysed reaction is L-glutamyl-tRNA(Gln) + L-glutamine + ATP + H2O = L-glutaminyl-tRNA(Gln) + L-glutamate + ADP + phosphate + H(+). It carries out the reaction L-aspartyl-tRNA(Asn) + L-glutamine + ATP + H2O = L-asparaginyl-tRNA(Asn) + L-glutamate + ADP + phosphate + 2 H(+). In terms of biological role, allows the formation of correctly charged Asn-tRNA(Asn) or Gln-tRNA(Gln) through the transamidation of misacylated Asp-tRNA(Asn) or Glu-tRNA(Gln) in organisms which lack either or both of asparaginyl-tRNA or glutaminyl-tRNA synthetases. The reaction takes place in the presence of glutamine and ATP through an activated phospho-Asp-tRNA(Asn) or phospho-Glu-tRNA(Gln). The protein is Aspartyl/glutamyl-tRNA(Asn/Gln) amidotransferase subunit B of Alkalilimnicola ehrlichii (strain ATCC BAA-1101 / DSM 17681 / MLHE-1).